The sequence spans 332 residues: HTH-type transcriptional regulator IdnR (332 aa).

Positions 6 to 60 constitute an HTH lacI-type domain; the sequence is ISLQDIATLAGVTKMTVSRYIRSPKKVAKETGERIAKIMEEINYIPNRAPGMLLN. The H-T-H motif DNA-binding region spans 8–27; the sequence is LQDIATLAGVTKMTVSRYIR.

Idn operon regulator. May repress gntKU and gntT genes when growing on L-idonate. The sequence is that of HTH-type transcriptional regulator IdnR (idnR) from Escherichia coli (strain K12).